We begin with the raw amino-acid sequence, 238 residues long: Small ribosomal subunit protein uS3 (238 aa).

Positions 39–108 (IRKFVKKKLF…NVAVNVIEVK (70 aa)) constitute a KH type-2 domain.

This sequence belongs to the universal ribosomal protein uS3 family. Part of the 30S ribosomal subunit. Forms a tight complex with proteins S10 and S14.

Its function is as follows. Binds the lower part of the 30S subunit head. Binds mRNA in the 70S ribosome, positioning it for translation. The protein is Small ribosomal subunit protein uS3 of Alkaliphilus oremlandii (strain OhILAs) (Clostridium oremlandii (strain OhILAs)).